A 103-amino-acid chain; its full sequence is Large ribosomal subunit protein bL21 (103 aa).

Belongs to the bacterial ribosomal protein bL21 family. In terms of assembly, part of the 50S ribosomal subunit. Contacts protein L20.

Its function is as follows. This protein binds to 23S rRNA in the presence of protein L20. The chain is Large ribosomal subunit protein bL21 from Shewanella sp. (strain ANA-3).